The following is a 565-amino-acid chain: Thiol:disulfide interchange protein DsbD (565 aa).

Positions 1–19 (MAQRIFTLILLLCSTSVFA) are cleaved as a signal peptide. 2 cysteine pairs are disulfide-bonded: Cys122-Cys128 and Cys182-Cys304. Helical transmembrane passes span 163–183 (LPFS…TPCV), 208–228 (LLTF…GLVV), 243–263 (YVLI…FGLF), 289–309 (GVFI…TAPL), 323–343 (WLGG…LMLI), 357–377 (WMEQ…VFLL), and 384–404 (IWGL…AFIT). Residues 434-565 (WAFGATHTAQ…FSAHLRDRQP (132 aa)) form the Thioredoxin domain. A disulfide bridge connects residues Cys480 and Cys483.

It belongs to the thioredoxin family. DsbD subfamily.

It localises to the cell inner membrane. It catalyses the reaction [protein]-dithiol + NAD(+) = [protein]-disulfide + NADH + H(+). The catalysed reaction is [protein]-dithiol + NADP(+) = [protein]-disulfide + NADPH + H(+). Its function is as follows. Required to facilitate the formation of correct disulfide bonds in some periplasmic proteins and for the assembly of the periplasmic c-type cytochromes. Acts by transferring electrons from cytoplasmic thioredoxin to the periplasm. This transfer involves a cascade of disulfide bond formation and reduction steps. The polypeptide is Thiol:disulfide interchange protein DsbD (Escherichia coli O6:H1 (strain CFT073 / ATCC 700928 / UPEC)).